The sequence spans 310 residues: HPr kinase/phosphorylase (310 aa).

Active-site residues include histidine 136 and lysine 157. Position 151 to 158 (151 to 158 (GDSGIGKS)) interacts with ATP. Serine 158 contacts Mg(2+). The Proton acceptor; for phosphorylation activity. Proton donor; for dephosphorylation activity role is filled by aspartate 175. An important for the catalytic mechanism of both phosphorylation and dephosphorylation region spans residues 199–208 (LEIRGLGIIN). Position 200 (glutamate 200) interacts with Mg(2+). Residue arginine 241 is part of the active site. The segment at 262-267 (PVRPGR) is important for the catalytic mechanism of dephosphorylation.

Belongs to the HPrK/P family. Homohexamer. Mg(2+) is required as a cofactor.

It catalyses the reaction [HPr protein]-L-serine + ATP = [HPr protein]-O-phospho-L-serine + ADP + H(+). It carries out the reaction [HPr protein]-O-phospho-L-serine + phosphate + H(+) = [HPr protein]-L-serine + diphosphate. Catalyzes the ATP- as well as the pyrophosphate-dependent phosphorylation of a specific serine residue in HPr, a phosphocarrier protein of the phosphoenolpyruvate-dependent sugar phosphotransferase system (PTS). HprK/P also catalyzes the pyrophosphate-producing, inorganic phosphate-dependent dephosphorylation (phosphorolysis) of seryl-phosphorylated HPr (P-Ser-HPr). The two antagonistic activities of HprK/P are regulated by several intracellular metabolites, which change their concentration in response to the absence or presence of rapidly metabolisable carbon sources (glucose, fructose, etc.) in the growth medium. Therefore, by controlling the phosphorylation state of HPr, HPrK/P is a sensor enzyme that plays a major role in the regulation of carbon metabolism and sugar transport: it mediates carbon catabolite repression (CCR), and regulates PTS-catalyzed carbohydrate uptake and inducer exclusion. This chain is HPr kinase/phosphorylase, found in Staphylococcus epidermidis (strain ATCC 35984 / DSM 28319 / BCRC 17069 / CCUG 31568 / BM 3577 / RP62A).